The chain runs to 142 residues: Hemoglobin subunit alpha (142 aa).

The 141-residue stretch at 2-142 (VLSAADKGNV…VSTVLTSKYR (141 aa)) folds into the Globin domain. At Ser4 the chain carries Phosphoserine. N6-succinyllysine is present on residues Lys8 and Lys12. Lys17 carries the N6-acetyllysine; alternate modification. An N6-succinyllysine; alternate modification is found at Lys17. Position 25 is a phosphotyrosine (Tyr25). Ser36 is modified (phosphoserine). Lys41 carries the post-translational modification N6-succinyllysine. A Phosphoserine modification is found at Ser50. His59 contributes to the O2 binding site. Residue His88 participates in heme b binding. Ser103 bears the Phosphoserine mark. Thr109 is subject to Phosphothreonine. Ser125 bears the Phosphoserine mark. Phosphothreonine is present on residues Thr135 and Thr138. Ser139 bears the Phosphoserine mark.

It belongs to the globin family. In terms of assembly, heterotetramer of two alpha chains and two beta chains. Red blood cells.

Involved in oxygen transport from the lung to the various peripheral tissues. Functionally, hemopressin acts as an antagonist peptide of the cannabinoid receptor CNR1. Hemopressin-binding efficiently blocks cannabinoid receptor CNR1 and subsequent signaling. The polypeptide is Hemoglobin subunit alpha (HBA) (Bos gaurus frontalis (Domestic gayal)).